Reading from the N-terminus, the 425-residue chain is Glutamate-1-semialdehyde 2,1-aminomutase (425 aa).

At K265 the chain carries N6-(pyridoxal phosphate)lysine.

The protein belongs to the class-III pyridoxal-phosphate-dependent aminotransferase family. HemL subfamily. In terms of assembly, homodimer. Pyridoxal 5'-phosphate serves as cofactor.

The protein localises to the cytoplasm. It catalyses the reaction (S)-4-amino-5-oxopentanoate = 5-aminolevulinate. The protein operates within porphyrin-containing compound metabolism; protoporphyrin-IX biosynthesis; 5-aminolevulinate from L-glutamyl-tRNA(Glu): step 2/2. The sequence is that of Glutamate-1-semialdehyde 2,1-aminomutase from Clostridium perfringens (strain 13 / Type A).